A 138-amino-acid polypeptide reads, in one-letter code: uncharacterized protein (138 aa).

The next 3 membrane-spanning stretches (helical) occupy residues 17–37, 43–63, and 117–137; these read LIVS…TVFF, INLI…LLVC, and FWWM…VVSL.

The protein localises to the cell membrane. This is an uncharacterized protein from Mycoplasma pneumoniae (strain ATCC 29342 / M129 / Subtype 1) (Mycoplasmoides pneumoniae).